Consider the following 1196-residue polypeptide: Major DNA-binding protein (1196 aa).

The segment at 499–512 is a zinc-finger region; the sequence is CNLCTFETRHACAH. 2 short sequence motifs (required for filament formation) span residues 843–844 and 1142–1144; these read FW and FNF. The interval 1171 to 1196 is required for nuclear localization; it reads RKRAFHGDDPFGEGPPEKKDLTLDML. A disordered region spans residues 1176 to 1196; that stretch reads HGDDPFGEGPPEKKDLTLDML.

The protein belongs to the herpesviridae major DNA-binding protein family. Homooligomers. Forms double-helical filaments necessary for the formation of replication compartments within the host nucleus. Interacts with the origin-binding protein. Interacts with the helicase primase complex; this interaction stimulates primer synthesis activity of the helicase-primase complex. Interacts with the DNA polymerase. Interacts with the alkaline exonuclease; this interaction increases its nuclease processivity.

It localises to the host nucleus. Its function is as follows. Plays several crucial roles in viral infection. Participates in the opening of the viral DNA origin to initiate replication by interacting with the origin-binding protein. May disrupt loops, hairpins and other secondary structures present on ssDNA to reduce and eliminate pausing of viral DNA polymerase at specific sites during elongation. Promotes viral DNA recombination by performing strand-transfer, characterized by the ability to transfer a DNA strand from a linear duplex to a complementary single-stranded DNA circle. Can also catalyze the renaturation of complementary single strands. Additionally, reorganizes the host cell nucleus, leading to the formation of prereplicative sites and replication compartments. This process is driven by the protein which can form double-helical filaments in the absence of DNA. In Human herpesvirus 2 (strain HG52) (HHV-2), this protein is Major DNA-binding protein.